The sequence spans 64 residues: Alpha-conotoxin-like Ac1.1a (64 aa).

The N-terminal stretch at 1 to 21 (MGMRMMFTLFLLVVLTTTVVS) is a signal peptide. A propeptide spanning residues 22-47 (YPSDSASDGRDDEAKDERSDMYELKR) is cleaved from the precursor. 2 cysteine pairs are disulfide-bonded: Cys51/Cys56 and Cys52/Cys62. Residue Cys62 is modified to Cysteine amide.

This sequence belongs to the conotoxin A superfamily. As to expression, expressed by the venom duct.

It is found in the secreted. Its function is as follows. Alpha-conotoxins act on postsynaptic membranes, they bind to the nicotinic acetylcholine receptors (nAChR) and thus inhibit them. The polypeptide is Alpha-conotoxin-like Ac1.1a (Conus achatinus (Little frog cone)).